Consider the following 495-residue polypeptide: DUF21 domain-containing protein At4g14230 (495 aa).

Topologically, residues 1–42 (MHPINAVVAARMLAGISQSNALQSEAIPFGSLEWITYAGISC) are extracellular. One can recognise a CNNM transmembrane domain in the interval 30 to 212 (GSLEWITYAG…GKGGELTHDE (183 aa)). Residues 43–63 (FLVLFAGIMSGLTLGLMSLGL) traverse the membrane as a helical segment. Residues 64–92 (VELEILQRSGTPKEKKQSAAIFPVVQKQH) lie on the Cytoplasmic side of the membrane. A helical transmembrane segment spans residues 93–113 (QLLVTLLLFNALAMEGLPIYL). The Extracellular segment spans residues 114–120 (DKIFNEY). Residues 121-141 (VAIILSVTFVLFVGEVIPQAI) traverse the membrane as a helical segment. The Cytoplasmic portion of the chain corresponds to 142–146 (CTRYG). The helical transmembrane segment at 147-167 (LAVGANLVWLVRILMVLSYPI) threads the bilayer. Residues 168 to 495 (SFPIAKMLDW…TMTGPPQGNN (328 aa)) lie on the Extracellular side of the membrane. CBS domains are found at residues 231-291 (MTPI…TGTL), 296-356 (GIRR…NNSE), and 357-426 (LTAP…IVDE). The tract at residues 330–354 (KGKSKGHPSTLHEENSGESNVSSNN) is disordered. N-linked (GlcNAc...) asparagine glycosylation is present at N349. S352 bears the Phosphoserine mark. Residue N353 is glycosylated (N-linked (GlcNAc...) asparagine). Positions 455–495 (SGRRLLGPKGSGGPKTPKASSTPKPDDKLMGTMTGPPQGNN) are disordered. A compositionally biased stretch (low complexity) spans 456–477 (GRRLLGPKGSGGPKTPKASSTP).

The protein localises to the membrane. The protein is DUF21 domain-containing protein At4g14230 (CBSDUF2) of Arabidopsis thaliana (Mouse-ear cress).